A 421-amino-acid polypeptide reads, in one-letter code: MVWEKEKIVGSCIVGGAAFAVGASFLHLFLKGELPLGLGLGLSCPWRILRKRKPVRVYMDGCFDMMHYGHCNALRQARALGDQLVVGVVSDEEIIANKGPPVTPLHERMTMVKAVKWVDEVISDAPYAITEDFMKKLFDEYQIDYIIHGDDPCVLPDGTDAYALAKKAGRYKQIKRTEGVSSTDIVGRMLLCVRERSISDTHSRSSLQRQFSHGHSSPKFEDGASSAGTRVSHFLPTSRRIVQFSNGKGPGPDARIIYIDGAFDLFHAGHVEILRRARELGDFLLVGIHNDQTVSAKRGAHRPIMNLHERSLSVLACRYVDEVIIGAPWEVSRDTITTFDISLVVHGTVAESDDFRKEEDNPYSVPISMGIFQVLDSPLDITTSTIIRRIVANHEAYQKRNAKKEASEKKYYEQKSFVSGD.

Residues 8 to 28 traverse the membrane as a helical segment; the sequence is IVGSCIVGGAAFAVGASFLHL. The disordered stretch occupies residues 203-227; it reads SRSSLQRQFSHGHSSPKFEDGASSA. Residues 204 to 215 show a composition bias toward polar residues; it reads RSSLQRQFSHGH. Residues 262 to 263, 270 to 273, Arg-298, 346 to 349, and 377 to 381 contribute to the CTP site; these read AF, HVEI, HGTV, and SPLDI. The interval 402–421 is disordered; sequence AKKEASEKKYYEQKSFVSGD. Over residues 403–413 the composition is skewed to basic and acidic residues; the sequence is KKEASEKKYYE. Phosphoserine is present on Ser-416.

The protein belongs to the cytidylyltransferase family. Expressed in root tip, lateral root primordia, leaves, shoot apex, stem vascular bundles, pollen and embryos.

It is found in the mitochondrion outer membrane. It carries out the reaction phosphoethanolamine + CTP + H(+) = CDP-ethanolamine + diphosphate. The protein operates within phospholipid metabolism; phosphatidylethanolamine biosynthesis; phosphatidylethanolamine from ethanolamine: step 2/3. Plays an important role in the biosynthesis of the phospholipid phosphatidylethanolamine. Catalyzes the formation of CDP-ethanolamine. Essential for early embryonic development. The polypeptide is Ethanolamine-phosphate cytidylyltransferase (Arabidopsis thaliana (Mouse-ear cress)).